Consider the following 689-residue polypeptide: Probable E3 ubiquitin ligase complex SCF subunit sconB (689 aa).

Composition is skewed to basic and acidic residues over residues 1–12 (MDAHELSFRDGH) and 19–29 (MKDECASEEKA). Residues 1–66 (MDAHELSFRD…STQDKPHSFN (66 aa)) form a disordered region. The region spanning 186-232 (IDFLTALPPEISFKILCYLDTTSLCKAAQVSRRWRALADDDVVWHRM) is the F-box domain. Residues 267–306 (AATWDVSEQPAETESNSATIDTAASGSKRKPESDKEDTAM) form a disordered region. The segment covering 276–291 (PAETESNSATIDTAAS) has biased composition (polar residues). Over residues 295-306 (RKPESDKEDTAM) the composition is skewed to basic and acidic residues. WD repeat units lie at residues 358–395 (GHSNGIMCLQFEDNILATGSYDATIKIWDTETGEELRT), 398–437 (GHRSGIRCLQFDDTKLISGSMDHTLKVWNWRTGECISTYS), 439–475 (HRGGVVGLHFDATILASGSVDKTVKIWNFEDKSTCLL), 477–518 (GHTD…RTFH), 572–615 (DTPS…CLRT), 616–655 (FFGHLEGVWALAADTLRIVSGAEDRMVKIWDPRTGKCERT), and 658–689 (GHSGPVTCIGLGDSRFATGSEDCEVRMYSFQT).

The protein belongs to the WD repeat MET30/SCONB/SCON-2 family. In terms of assembly, component of the SCF(sconB) E3 ubiquitin ligase complex.

It functions in the pathway protein modification; protein ubiquitination. Functionally, component of the SCF(sconB) E3 ubiquitin ligase complex involved in the regulation of sulfur metabolite repression, probably by mediating the inactivation or degradation of the metR transcription factor. The chain is Probable E3 ubiquitin ligase complex SCF subunit sconB (sconB) from Neosartorya fischeri (strain ATCC 1020 / DSM 3700 / CBS 544.65 / FGSC A1164 / JCM 1740 / NRRL 181 / WB 181) (Aspergillus fischerianus).